The sequence spans 244 residues: Agamous-like MADS-box protein MADS2 (244 aa).

An MADS-box domain is found at 1 to 61 (MGRGRVELKR…GKLYEFCSSS (61 aa)). The K-box domain maps to 88-178 (EQSSYREYLK…TRKLDEISVK (91 aa)).

As to expression, expressed in flowers and seeds.

Its subcellular location is the nucleus. Its function is as follows. Probable transcription factor involved in flower development. The polypeptide is Agamous-like MADS-box protein MADS2 (Vitis vinifera (Grape)).